The sequence spans 327 residues: Asnovolin J 5',6'-dehydrogenase nvfM (327 aa).

A helical transmembrane segment spans residues 9–29 (VAIVGASGVTGGSIVNGLLAL). NADP(+) contacts are provided by residues 13 to 19 (GASGVTG) and lysine 47. The active-site Proton acceptor is the lysine 130.

This sequence belongs to the NmrA-type oxidoreductase family.

Its subcellular location is the membrane. The enzyme catalyses asnovolin K + AH2 = asnovolin A + A. It catalyses the reaction chermesin D methyl ester + AH2 = asnovolin J + A. It functions in the pathway secondary metabolite biosynthesis; terpenoid biosynthesis. In terms of biological role, asnovolin J 5',6'-dehydrogenase; part of the gene cluster that mediates the biosynthesis of novofumigatonin, a heavily oxygenated meroterpenoid containing a unique orthoester moiety. The first step of the pathway is the synthesis of 3,5-dimethylorsellinic acid (DMOA) by the polyketide synthase nvfA via condensation of one acetyl-CoA starter unit with 3 malonyl-CoA units and 2 methylations. DMOA is then converted to farnesyl-DMOA by the farnesyltransferase nvfB. Epoxydation by FAD-dependent monooxygenase nvfK, followed by a protonation-initiated cyclization catalyzed by the terpene cyclase nvfL leads to the production of asnavolin H. The short chain dehydrogenase nvfC then as a 3-OH dehydrogenase of asnovolin H to yield chemesin D. There are two branches to synthesize asnovolin A from chemesin D. In one branch, chemesin D undergoes Baeyer-Villiger oxidation by nvfH, methylation by nvfJ, and enoyl reduction by the nvfM D enoylreductase that reduces the double bond between C-5'and C-6', to form respectively asnovolin I, asnovolin K, and asnovolin A. In the other branch, the methylation precedes the Baeyer-Villiger oxidation and the enoyl reduction to yield asnovolin A via the asnovolin J intermediate. Asnovolin A is further converted to fumigatonoid A by the Fe(II)/2-oxoglutarate-dependent dioxygenase nvfI that catalyzes an endoperoxidation reaction. The alpha/beta hydrolase nvfD then acts as an epimerase that converts fumigatonoid A to its C-5' epimer, which then undergoes spontaneous or nvfD-catalyzed lactonization. The following step utilizes the ketoreductase nvfG to produce fumigatonoid B. The dioxygenase nvfE further converts fumigatonoid B into fumigatonoid C. Finally the Fe(II)/2-oxoglutarate-dependent dioxygenase nvfF catalyzes two rounds of oxidation to transform fumigatonoid C into the end product, novofumigatonin A. This chain is Asnovolin J 5',6'-dehydrogenase nvfM, found in Aspergillus novofumigatus (strain IBT 16806).